The chain runs to 1591 residues: Rho guanine nucleotide exchange factor TIAM1 (1591 aa).

Residues 1 to 70 (MGNAESQNVD…TPSIPQSLAE (70 aa)) form a disordered region. Gly-2 carries the N-myristoyl glycine lipid modification. Residues 8 to 19 (NVDHEFYGEKHA) show a composition bias toward basic and acidic residues. Over residues 20 to 49 (SLGRKHTSRSLRLSHKTRRTRHASSGKAIH) the composition is skewed to basic residues. A compositionally biased stretch (low complexity) spans 53–67 (EVSTRSSSTPSIPQS). Phosphoserine is present on residues Ser-231, Ser-356, and Ser-358. Disordered stretches follow at residues 305–380 (QISL…DRAR) and 393–422 (MSTT…SPGQ). Over residues 340–359 (TTDTDLLSRRSNATNSSYSP) the composition is skewed to polar residues. A compositionally biased stretch (low complexity) spans 367-376 (GSDSGSSSTG). Residues 412–422 (QSSGTLSSPGQ) show a composition bias toward polar residues. Residues 434 to 549 (VRKAGALAVK…TAIHSACAAA (116 aa)) form the PH 1 domain. Ser-695 is subject to Phosphoserine. Positions 765-832 (TPSWFCLPNN…QPEEDIYELL (68 aa)) constitute an RBD domain. Tyr-829 bears the Phosphotyrosine; by NTRK2 mark. In terms of domain architecture, PDZ spans 845–908 (NIHIEKSDAA…NNRAAGTLNS (64 aa)). The tract at residues 933–1034 (GVELLENPPH…TSPQLATTRQ (102 aa)) is disordered. Positions 958 to 975 (LTSNPGHSLSSEQGSSAE) are enriched in polar residues. Acidic residues predominate over residues 977 to 990 (APEEGEGPDLESSD). The segment covering 1014 to 1028 (PSDSSPSPQDATSPQ) has biased composition (low complexity). Positions 1040-1234 (KLRKVICELL…NKVASHINEM (195 aa)) constitute a DH domain. One can recognise a PH 2 domain in the interval 1261–1397 (DLSMGDLLLH…KSVHSILRDK (137 aa)). Position 1323 is a phosphotyrosine (Tyr-1323). Residues Lys-1404 and Lys-1420 each participate in a glycyl lysine isopeptide (Lys-Gly) (interchain with G-Cter in ubiquitin) cross-link. The disordered stretch occupies residues 1456-1481 (TIDSDAISASSPEKEPQQPAGGGDTD). A Phosphoserine modification is found at Ser-1519.

The protein belongs to the TIAM family. As to quaternary structure, component of the Par polarity complex, composed of at least phosphorylated PRKCZ, PARD3 and TIAM1. Interacts with BAIAP2. Interacts (via PDZ domain) with CNTNAP4, SDC1 and SDC3 (via C-terminus). Interacts with CD44, PARD3 and MAPK8IP2. Interacts with EPHA8; regulates clathrin-mediated endocytosis of EPHA8. Interacts with NTRK2; mediates the activation of RAC1 by BDNF. In terms of processing, ubiquitinated. Undergoes 'Lys-48' ubiquitination at Lys-1404 and Lys-1420 by a CUL3(KBTBD6/7) E3 ubiquitin ligase complex composed of CUL3, RBX1, KBTBD6 and KBTBD7. 'Lys-48' ubiquitination at Lys-1404 and Lys-1420 triggers proteasomal degradation. Ubiquitination at Lys-1404 and Lys-1420 by CUL3(KBTBD6/7) also requires the membrane-associated protein GABARAP and may therefore be spatially restricted within the cell. As to expression, highly expressed in brain and testis and at low or moderate levels in almost all other normal tissues. Found in virtually all analyzed tumor cell lines including B- and T-lymphomas, neuroblastomas, melanomas and carcinomas.

It is found in the cell junction. Its subcellular location is the cell membrane. Its function is as follows. Guanyl-nucleotide exchange factor that activates RHO-like proteins and connects extracellular signals to cytoskeletal activities. Activates RAC1, CDC42, and to a lesser extent RHOA and their downstream signaling to regulate processes like cell adhesion and cell migration. The protein is Rho guanine nucleotide exchange factor TIAM1 of Mus musculus (Mouse).